A 200-amino-acid chain; its full sequence is Imidazole glycerol phosphate synthase subunit HisH (200 aa).

The region spanning 3–200 is the Glutamine amidotransferase type-1 domain; sequence DVALIDAGGA…LHNFLEMSFP (198 aa). The active-site Nucleophile is Cys78. Catalysis depends on residues His179 and Glu181.

As to quaternary structure, heterodimer of HisH and HisF.

It localises to the cytoplasm. It catalyses the reaction 5-[(5-phospho-1-deoxy-D-ribulos-1-ylimino)methylamino]-1-(5-phospho-beta-D-ribosyl)imidazole-4-carboxamide + L-glutamine = D-erythro-1-(imidazol-4-yl)glycerol 3-phosphate + 5-amino-1-(5-phospho-beta-D-ribosyl)imidazole-4-carboxamide + L-glutamate + H(+). It carries out the reaction L-glutamine + H2O = L-glutamate + NH4(+). It participates in amino-acid biosynthesis; L-histidine biosynthesis; L-histidine from 5-phospho-alpha-D-ribose 1-diphosphate: step 5/9. Functionally, IGPS catalyzes the conversion of PRFAR and glutamine to IGP, AICAR and glutamate. The HisH subunit catalyzes the hydrolysis of glutamine to glutamate and ammonia as part of the synthesis of IGP and AICAR. The resulting ammonia molecule is channeled to the active site of HisF. The chain is Imidazole glycerol phosphate synthase subunit HisH from Xanthomonas oryzae pv. oryzae (strain MAFF 311018).